Here is a 283-residue protein sequence, read N- to C-terminus: ATP phosphoribosyltransferase (283 aa).

It belongs to the ATP phosphoribosyltransferase family. Long subfamily. Requires Mg(2+) as cofactor.

Its subcellular location is the cytoplasm. It carries out the reaction 1-(5-phospho-beta-D-ribosyl)-ATP + diphosphate = 5-phospho-alpha-D-ribose 1-diphosphate + ATP. It functions in the pathway amino-acid biosynthesis; L-histidine biosynthesis; L-histidine from 5-phospho-alpha-D-ribose 1-diphosphate: step 1/9. Its activity is regulated as follows. Feedback inhibited by histidine. Catalyzes the condensation of ATP and 5-phosphoribose 1-diphosphate to form N'-(5'-phosphoribosyl)-ATP (PR-ATP). Has a crucial role in the pathway because the rate of histidine biosynthesis seems to be controlled primarily by regulation of HisG enzymatic activity. This chain is ATP phosphoribosyltransferase, found in Bifidobacterium longum (strain NCC 2705).